The sequence spans 605 residues: Anaerobic ribonucleoside-triphosphate reductase (605 aa).

The dCTP site is built by histidine 64 and histidine 66. DGTP contacts are provided by histidine 64, histidine 66, aspartate 67, glutamate 100, and lysine 103. DCTP contacts are provided by residues glutamate 100, lysine 103, glutamine 114, lysine 146, and alanine 445 to leucine 448. Positions 100, 103, 114, and 146 each coordinate dATP. Position 100 (glutamate 100) interacts with dTTP. DTTP is bound by residues glutamine 114 and lysine 146. Residues lysine 146, asparagine 447, and leucine 448 each contribute to the dGTP site. One can recognise a Glycine radical domain in the interval glutamate 482–glutamine 605. Zn(2+) is bound by residues cysteine 543, cysteine 546, cysteine 561, and cysteine 564. Position 580 is a glycine radical (glycine 580).

The protein belongs to the anaerobic ribonucleoside-triphosphate reductase family. As to quaternary structure, homodimer. Forms a tetramer composed of two NrdD and two NrdG subunits.

It carries out the reaction a ribonucleoside 5'-triphosphate + formate + H(+) = a 2'-deoxyribonucleoside 5'-triphosphate + CO2 + H2O. Activated under anaerobic conditions by NrdG, a tightly associated activase. Activation involves the formation of a glycyl radical at Gly-580. Its function is as follows. Catalyzes the conversion of ribonucleotides into deoxyribonucleotides, which are required for DNA synthesis and repair. In Enterobacteria phage T4 (Bacteriophage T4), this protein is Anaerobic ribonucleoside-triphosphate reductase.